The sequence spans 383 residues: Ribosomal RNA large subunit methyltransferase G (383 aa).

The protein belongs to the methyltransferase superfamily. RlmG family.

It is found in the cytoplasm. The catalysed reaction is guanosine(1835) in 23S rRNA + S-adenosyl-L-methionine = N(2)-methylguanosine(1835) in 23S rRNA + S-adenosyl-L-homocysteine + H(+). Functionally, specifically methylates the guanine in position 1835 (m2G1835) of 23S rRNA. The polypeptide is Ribosomal RNA large subunit methyltransferase G (Shewanella amazonensis (strain ATCC BAA-1098 / SB2B)).